The following is a 159-amino-acid chain: MKLLSKIMIIALATSMLQACNGPGGMNKQGTGTLLGGAGGALLGSQFGKGKGQLVGVGVGALLGAVLGGQIGAGMDEQDRRLAELTSQRALETAPSGSNVEWRNPDNGNYGYVTPNKTYRNSTGQYCREYTQTVVIGGKQQKAYGNACRQPDGQWQVVN.

The N-terminal stretch at 1–19 (MKLLSKIMIIALATSMLQA) is a signal peptide. A lipid anchor (N-palmitoyl cysteine) is attached at Cys-20. A lipid anchor (S-diacylglycerol cysteine) is attached at Cys-20.

It belongs to the rickettsiale 17 kDa surface antigen family.

It localises to the cell outer membrane. The polypeptide is 17 kDa surface antigen (omp) (Rickettsia conorii (strain ATCC VR-613 / Malish 7)).